The primary structure comprises 1123 residues: Rabphilin-1 (1123 aa).

Positions 1-17 (MTKSTKLRHCKQKKKKP) are enriched in basic residues. 2 disordered regions span residues 1–56 (MTKS…GSRS) and 88–140 (SAHN…PSTH). Residues 36–46 (DAATTTSTTDA) show a composition bias toward low complexity. The RabBD domain maps to 215 to 341 (KAQTGSITAA…KKSGAWFYKE (127 aa)). The segment at 263–328 (GNGVTHCLLC…LCKICSEARE (66 aa)) adopts an FYVE-type zinc-finger fold. Zn(2+) contacts are provided by cysteine 269, cysteine 272, cysteine 288, cysteine 291, cysteine 296, cysteine 300, cysteine 320, and cysteine 323. 4 stretches are compositionally biased toward polar residues: residues 365–375 (PNASSAATPLS), 387–400 (TMPS…TTPK), 410–428 (PGLQ…GTRR), and 487–497 (ASSSDGESFVQ). Disordered regions lie at residues 365–710 (PNAS…VGSA), 737–779 (TSRA…LRTS), and 796–818 (HIVS…VPIP). The span at 531–541 (SRREANMERFS) shows a compositional bias: basic and acidic residues. A compositionally biased stretch (low complexity) spans 563–574 (ESRPSTRSTSPR). Composition is skewed to polar residues over residues 605-632 (VVQS…QQQA) and 649-666 (PDRT…TSLV). Residues 742–753 (SPLAASSSFLSS) show a composition bias toward low complexity. A compositionally biased stretch (basic and acidic residues) spans 756–768 (DDTKQKNRRRDGV). A compositionally biased stretch (low complexity) spans 803 to 818 (TSSTTSNQNHTSVPIP). C2 domains lie at 844 to 967 (SLGS…NLYL) and 984 to 1103 (DRGK…RQWI). Residues aspartate 875, aspartate 881, aspartate 936, aspartate 938, aspartate 943, aspartate 1015, aspartate 1021, aspartate 1075, aspartate 1077, and aspartate 1083 each contribute to the Ca(2+) site.

The cofactor is Ca(2+).

It is found in the synapse. Functionally, rab-3 effector. The sequence is that of Rabphilin-1 (rbf-1) from Caenorhabditis elegans.